Reading from the N-terminus, the 132-residue chain is Fluoride-specific ion channel FluC 1 (132 aa).

A run of 4 helical transmembrane segments spans residues 9–29, 35–55, 72–89, and 100–120; these read LAAV…LSAL, ASWP…VGYF, LLGT…TMQV, and WGLA…AVHL. Glycine 79 and threonine 82 together coordinate Na(+).

This sequence belongs to the fluoride channel Fluc/FEX (TC 1.A.43) family.

The protein resides in the cell membrane. The enzyme catalyses fluoride(in) = fluoride(out). With respect to regulation, na(+) is not transported, but it plays an essential structural role and its presence is essential for fluoride channel function. Its function is as follows. Fluoride-specific ion channel. Important for reducing fluoride concentration in the cell, thus reducing its toxicity. The protein is Fluoride-specific ion channel FluC 1 of Mycolicibacterium paratuberculosis (strain ATCC BAA-968 / K-10) (Mycobacterium paratuberculosis).